Consider the following 781-residue polypeptide: Cadherin-24 (781 aa).

An N-terminal signal peptide occupies residues 1–22 (MWGLVRLLLAWLGGWGCMGRLA). The propeptide occupies 23-44 (APVPAWAGSRGHSGPTLLRTRR). Over 45 to 603 (SWVWNQFFVI…LSPTGLSTGA (559 aa)) the chain is Extracellular. Cadherin domains follow at residues 46-150 (WVWN…PPVF), 151-259 (PLGP…PPKF), 260-374 (PQSL…PPAF), 375-479 (TQAT…APQL), and 479-592 (LAEP…WPEA). 3 N-linked (GlcNAc...) asparagine glycosylation sites follow: Asn-446, Asn-510, and Asn-525. The helical transmembrane segment at 604-624 (LLAIVTCMGTLLALVVLFVAL) threads the bilayer. The Cytoplasmic portion of the chain corresponds to 625–781 (RRQKQEALMV…LYGAKEPPAP (157 aa)). 2 disordered regions span residues 665–700 (LQNPDGAAPPAAGPPVRRDVLPRTRAPRQPRPPGPA) and 731–762 (EGRGSSCGSLSSLGSGSEAGGVPGPAEPLDDW). Low complexity predominate over residues 733 to 746 (RGSSCGSLSSLGSG).

In terms of assembly, associates with alpha-, beta- and delta-catenins.

The protein resides in the cell membrane. In terms of biological role, cadherins are calcium-dependent cell adhesion proteins. They preferentially interact with themselves in a homophilic manner in connecting cells; cadherins may thus contribute to the sorting of heterogeneous cell types. Cadherin-24 mediate strong cell-cell adhesion. This chain is Cadherin-24 (Cdh24), found in Mus musculus (Mouse).